The sequence spans 400 residues: Elongation factor Tu (400 aa).

The region spanning 10-209 (KPHVNIGTIG…NVDAYIPTPE (200 aa)) is the tr-type G domain. Positions 19–26 (GHVDHGKT) are G1. 19-26 (GHVDHGKT) serves as a coordination point for GTP. A Mg(2+)-binding site is contributed by Thr26. The tract at residues 60-64 (GITIN) is G2. The G3 stretch occupies residues 81–84 (DCPG). Residues 81–85 (DCPGH) and 136–139 (NKSD) each bind GTP. The G4 stretch occupies residues 136–139 (NKSD). A G5 region spans residues 174-176 (SGL).

It belongs to the TRAFAC class translation factor GTPase superfamily. Classic translation factor GTPase family. EF-Tu/EF-1A subfamily. As to quaternary structure, monomer.

It is found in the cytoplasm. It carries out the reaction GTP + H2O = GDP + phosphate + H(+). Its function is as follows. GTP hydrolase that promotes the GTP-dependent binding of aminoacyl-tRNA to the A-site of ribosomes during protein biosynthesis. This is Elongation factor Tu from Desulforamulus reducens (strain ATCC BAA-1160 / DSM 100696 / MI-1) (Desulfotomaculum reducens).